We begin with the raw amino-acid sequence, 481 residues long: Alpha-ketoglutaric semialdehyde dehydrogenase 1 (481 aa).

Residues 154-155, 178-181, and 231-232 contribute to the NADP(+) site; these read WN, KAPE, and GS. Glutamate 253 acts as the Proton acceptor in catalysis. NADP(+) is bound at residue leucine 254. The active-site Nucleophile is the cysteine 287. Residue glutamate 384 coordinates NADP(+).

The protein belongs to the aldehyde dehydrogenase family. In terms of assembly, homotetramer.

The enzyme catalyses 2,5-dioxopentanoate + NADP(+) + H2O = 2-oxoglutarate + NADPH + 2 H(+). It carries out the reaction 2,5-dioxopentanoate + NAD(+) + H2O = 2-oxoglutarate + NADH + 2 H(+). The catalysed reaction is succinate semialdehyde + NAD(+) + H2O = succinate + NADH + 2 H(+). Catalyzes the NAD(P)(+)-dependent oxidation of alpha-ketoglutaric semialdehyde (alphaKGSA) to alpha-ketoglutarate. Is involved in a degradation pathway of L-arabinose that allows A.brasilense to grow on L-arabinose as a sole carbon source. Prefers NAD(+) to NADP(+) as a cosubstrate. Displays broad substrate specificity: exhibits the highest activity with alphaKGSA and succinic semialdehyde as substrates, but to a lesser extent, is also active with glutaraldehyde, benzaldehyde, and a number of aldehydes from C3 to C8. The protein is Alpha-ketoglutaric semialdehyde dehydrogenase 1 (araE) of Azospirillum brasilense.